A 521-amino-acid chain; its full sequence is Zinc finger and BTB domain-containing protein 18 (521 aa).

The BTB domain maps to 24 to 91 (CDCTVLVGDA…MYEGKLQFKD (68 aa)). Residues 190-230 (DSASIPQTGGEAETHTAAAGKTADSPCSSTGSLSHRSATSM) are disordered. Low complexity predominate over residues 197–212 (TGGEAETHTAAAGKTA). Polar residues predominate over residues 214–230 (SPCSSTGSLSHRSATSM). C2H2-type zinc fingers lie at residues 369-391 (FMCP…LSTH), 409-431 (PTCS…ERTH), 437-459 (FTCT…AVVH), and 465-488 (HACK…RKFH).

The protein belongs to the krueppel C2H2-type zinc-finger protein family. ZBTB18 subfamily.

Its subcellular location is the nucleus. Functionally, transcriptional repressor that plays a role in various developmental processes. Specifically binds the consensus DNA sequence 5'-[AC]ACATCTG[GT][AC]-3' which contains the E box core, and acts by recruiting chromatin remodeling multiprotein complexes. The chain is Zinc finger and BTB domain-containing protein 18 (zbtb18) from Xenopus tropicalis (Western clawed frog).